The sequence spans 87 residues: Small ribosomal subunit protein bS20 (87 aa).

A disordered region spans residues 1-25 (MANTAQARKRARQSVQRNKHNSSLR). Basic residues predominate over residues 7–22 (ARKRARQSVQRNKHNS).

It belongs to the bacterial ribosomal protein bS20 family.

Binds directly to 16S ribosomal RNA. This is Small ribosomal subunit protein bS20 from Bordetella bronchiseptica (strain ATCC BAA-588 / NCTC 13252 / RB50) (Alcaligenes bronchisepticus).